The primary structure comprises 453 residues: 3-phosphoshikimate 1-carboxyvinyltransferase (453 aa).

The disordered stretch occupies residues 1 to 25 (MSHDSEPQPVTAHPAGPLTGALKPP). 3-phosphoshikimate contacts are provided by K28, S29, and R33. K28 is a phosphoenolpyruvate binding site. Residues G101 and R129 each coordinate phosphoenolpyruvate. 3-phosphoshikimate contacts are provided by S175, Q177, D330, and K357. Q177 provides a ligand contact to phosphoenolpyruvate. D330 functions as the Proton acceptor in the catalytic mechanism. Phosphoenolpyruvate is bound by residues R361 and R405.

Belongs to the EPSP synthase family. As to quaternary structure, monomer.

The protein localises to the cytoplasm. The catalysed reaction is 3-phosphoshikimate + phosphoenolpyruvate = 5-O-(1-carboxyvinyl)-3-phosphoshikimate + phosphate. The protein operates within metabolic intermediate biosynthesis; chorismate biosynthesis; chorismate from D-erythrose 4-phosphate and phosphoenolpyruvate: step 6/7. Catalyzes the transfer of the enolpyruvyl moiety of phosphoenolpyruvate (PEP) to the 5-hydroxyl of shikimate-3-phosphate (S3P) to produce enolpyruvyl shikimate-3-phosphate and inorganic phosphate. In Methylorubrum populi (strain ATCC BAA-705 / NCIMB 13946 / BJ001) (Methylobacterium populi), this protein is 3-phosphoshikimate 1-carboxyvinyltransferase.